The following is a 119-amino-acid chain: MARVKRGVTAHAKHKKVYKITKGFSGRRKNTIRAAKAAADKAGQYAFRDRKRKKRTFRALWIQRLNAAVRPFGMTYSVFINGLSKSGITVDRKVLSDLAINEPAAFQAIAEKAKAALAA.

Belongs to the bacterial ribosomal protein bL20 family.

Functionally, binds directly to 23S ribosomal RNA and is necessary for the in vitro assembly process of the 50S ribosomal subunit. It is not involved in the protein synthesizing functions of that subunit. The polypeptide is Large ribosomal subunit protein bL20 (Nitrobacter hamburgensis (strain DSM 10229 / NCIMB 13809 / X14)).